The chain runs to 468 residues: Midnolin (468 aa).

The Ubiquitin-like domain occupies methionine 31–glycine 105. Disordered stretches follow at residues proline 182 to lysine 264 and leucine 404 to aspartate 447. Residues alanine 185 to valine 201 show a composition bias toward low complexity. The segment covering proline 202–proline 213 has biased composition (pro residues). Low complexity-rich tracts occupy residues serine 237–proline 260 and serine 419–serine 431.

In terms of assembly, interacts with GCK; the interaction occurs preferentially at low glucose levels. Interacts with the proteasome.

It localises to the nucleus. Its subcellular location is the nucleolus. The protein localises to the cytoplasm. The protein resides in the cytosol. Functionally, facilitates the ubiquitin-independent proteasomal degradation of stimulus-induced transcription factors such as FOSB, EGR1, NR4A1, and IRF4 to the proteasome for degradation. Promotes also the degradation of other substrates such as CBX4. Plays a role in inhibiting the activity of glucokinase GCK and both glucose-induced and basal insulin secretion. The sequence is that of Midnolin (MIDN) from Homo sapiens (Human).